Reading from the N-terminus, the 220-residue chain is Probable cutinase 5 (220 aa).

The signal sequence occupies residues 1–18; that stretch reads MVALHTLLLTAFAAVSLA. 2 cysteine pairs are disulfide-bonded: Cys42–Cys121 and Cys68–Cys82. The Nucleophile role is filled by Ser132. An intrachain disulfide couples Cys183 to Cys190. Asp187 is an active-site residue. Catalysis depends on His200, which acts as the Proton donor/acceptor.

The protein belongs to the cutinase family.

The protein resides in the secreted. It catalyses the reaction cutin + H2O = cutin monomers.. Catalyzes the hydrolysis of complex carboxylic polyesters found in the cell wall of plants. Degrades cutin, a macromolecule that forms the structure of the plant cuticle. The polypeptide is Probable cutinase 5 (Aspergillus terreus (strain NIH 2624 / FGSC A1156)).